The following is a 601-amino-acid chain: Mitochondrial tRNA methylthiotransferase CDK5RAP1 (601 aa).

A mitochondrion-targeting transit peptide spans 1–33; it reads MHPLQCVLQVQRSLGWGPLASVSWLSLRMCRAH. The MTTase N-terminal domain maps to 100–220; it reads RKVYLETYGC…LPRLLAVAES (121 aa). [4Fe-4S] cluster contacts are provided by Cys109, Cys145, Cys183, Cys258, Cys262, and Cys265. Residues 244–512 form the Radical SAM core domain; sequence SASATSAFVS…ITIFREEATK (269 aa). Positions 515–590 constitute a TRAM domain; that stretch reads QTSVGCTQLV…SQTLRGHVLC (76 aa).

This sequence belongs to the methylthiotransferase family. MiaB subfamily. In terms of assembly, interacts with CDK5R1 (p35 form). CDK5RAP1, CDK5RAP2 and CDK5RAP3 show competitive binding to CDK5R1. Forms a complex with CDK5R1 and CDK5. Requires [4Fe-4S] cluster as cofactor. Expressed in heart, brain, placenta, lung, liver, skeletal muscle, kidney and pancreas. Expressed in neurons of central nervous tissue. As to expression, mainly expressed in brain, placenta and testis. In terms of tissue distribution, high expression in placenta and lung.

It is found in the mitochondrion. The catalysed reaction is N(6)-dimethylallyladenosine(37) in tRNA + (sulfur carrier)-SH + AH2 + 2 S-adenosyl-L-methionine = 2-methylsulfanyl-N(6)-dimethylallyladenosine(37) in tRNA + (sulfur carrier)-H + 5'-deoxyadenosine + L-methionine + A + S-adenosyl-L-homocysteine + 2 H(+). Methylthiotransferase that catalyzes the conversion of N6-(dimethylallyl)adenosine (i(6)A) to 2-methylthio-N6-(dimethylallyl)adenosine (ms(2)i(6)A) at position 37 (adjacent to the 3'-end of the anticodon) of four mitochondrial DNA-encoded tRNAs (Ser(UCN), Phe, Tyr and Trp). Essential for efficient and highly accurate protein translation by the ribosome. Specifically inhibits CDK5 activation by CDK5R1. Essential for efficient mitochondrial protein synthesis and respiratory chain; shows pathological consequences in mitochondrial disease. This is Mitochondrial tRNA methylthiotransferase CDK5RAP1 from Homo sapiens (Human).